The following is a 165-amino-acid chain: MSTLINGTSLGNLLIVTGSFILLLLLVKKFAWSQLAAIFKAREEKIAKDIDDAENSRQNAQVLENKRQVELNQAKDEAAQIIDNAKETGKAQESKIITEAHEEAGRLKDKANQDIATSKAEALSSVKADVADLSVLLAEKIMAKNLDKTAQGDLIDSYLDKLGDA.

The chain crosses the membrane as a helical span at residues Gly-7–Val-27.

Belongs to the ATPase B chain family. In terms of assembly, F-type ATPases have 2 components, F(1) - the catalytic core - and F(0) - the membrane proton channel. F(1) has five subunits: alpha(3), beta(3), gamma(1), delta(1), epsilon(1). F(0) has three main subunits: a(1), b(2) and c(10-14). The alpha and beta chains form an alternating ring which encloses part of the gamma chain. F(1) is attached to F(0) by a central stalk formed by the gamma and epsilon chains, while a peripheral stalk is formed by the delta and b chains.

The protein resides in the cell membrane. Functionally, f(1)F(0) ATP synthase produces ATP from ADP in the presence of a proton or sodium gradient. F-type ATPases consist of two structural domains, F(1) containing the extramembraneous catalytic core and F(0) containing the membrane proton channel, linked together by a central stalk and a peripheral stalk. During catalysis, ATP synthesis in the catalytic domain of F(1) is coupled via a rotary mechanism of the central stalk subunits to proton translocation. Component of the F(0) channel, it forms part of the peripheral stalk, linking F(1) to F(0). This Streptococcus mutans serotype c (strain ATCC 700610 / UA159) protein is ATP synthase subunit b.